The following is a 413-amino-acid chain: Alpha-1-antitrypsin-like protein GS55-LT (413 aa).

The signal sequence occupies residues 1-21 (MPSSISWGLLLLAGLSCLATG). Residues Asn-65, Asn-102, and Asn-123 are each glycosylated (N-linked (GlcNAc...) asparagine). The interval 368 to 387 (RHTVKGPMALTLAPEVKFNR) is RCL.

This sequence belongs to the serpin family.

It is found in the secreted. Its function is as follows. Inhibitor of serine proteases. The polypeptide is Alpha-1-antitrypsin-like protein GS55-LT (Ictidomys tridecemlineatus (Thirteen-lined ground squirrel)).